Here is a 429-residue protein sequence, read N- to C-terminus: Adenosylmethionine-8-amino-7-oxononanoate aminotransferase (429 aa).

W52 lines the substrate pocket. Position 112 to 113 (112 to 113 (GS)) interacts with pyridoxal 5'-phosphate. Position 144 (Y144) interacts with substrate. Residue D245 participates in pyridoxal 5'-phosphate binding. K274 and G307 together coordinate substrate. At K274 the chain carries N6-(pyridoxal phosphate)lysine. 308–309 (PT) is a binding site for pyridoxal 5'-phosphate. R391 serves as a coordination point for substrate.

The protein belongs to the class-III pyridoxal-phosphate-dependent aminotransferase family. BioA subfamily. In terms of assembly, homodimer. The cofactor is pyridoxal 5'-phosphate.

Its subcellular location is the cytoplasm. The catalysed reaction is (8S)-8-amino-7-oxononanoate + S-adenosyl-L-methionine = S-adenosyl-4-methylsulfanyl-2-oxobutanoate + (7R,8S)-7,8-diammoniononanoate. It participates in cofactor biosynthesis; biotin biosynthesis; 7,8-diaminononanoate from 8-amino-7-oxononanoate (SAM route): step 1/1. Functionally, catalyzes the transfer of the alpha-amino group from S-adenosyl-L-methionine (SAM) to 7-keto-8-aminopelargonic acid (KAPA) to form 7,8-diaminopelargonic acid (DAPA). It is the only aminotransferase known to utilize SAM as an amino donor. The chain is Adenosylmethionine-8-amino-7-oxononanoate aminotransferase from Buchnera aphidicola subsp. Baizongia pistaciae (strain Bp).